A 180-amino-acid chain; its full sequence is NADH-quinone oxidoreductase subunit I (180 aa).

4Fe-4S ferredoxin-type domains lie at 48 to 80 and 90 to 119; these read IVLT…LQKA and EFFR…LTPD. Residues cysteine 60, cysteine 63, cysteine 66, cysteine 70, cysteine 99, cysteine 102, cysteine 105, and cysteine 109 each coordinate [4Fe-4S] cluster.

This sequence belongs to the complex I 23 kDa subunit family. In terms of assembly, NDH-1 is composed of 13 different subunits. Subunits NuoA, H, J, K, L, M, N constitute the membrane sector of the complex. The cofactor is [4Fe-4S] cluster.

The protein localises to the cell inner membrane. It carries out the reaction a quinone + NADH + 5 H(+)(in) = a quinol + NAD(+) + 4 H(+)(out). Its function is as follows. NDH-1 shuttles electrons from NADH, via FMN and iron-sulfur (Fe-S) centers, to quinones in the respiratory chain. The immediate electron acceptor for the enzyme in this species is believed to be ubiquinone. Couples the redox reaction to proton translocation (for every two electrons transferred, four hydrogen ions are translocated across the cytoplasmic membrane), and thus conserves the redox energy in a proton gradient. The chain is NADH-quinone oxidoreductase subunit I from Erwinia tasmaniensis (strain DSM 17950 / CFBP 7177 / CIP 109463 / NCPPB 4357 / Et1/99).